A 235-amino-acid polypeptide reads, in one-letter code: Myelin protein zero-like protein 3 (235 aa).

An N-terminal signal peptide occupies residues 1-31 (MQQRGAAGSRGCALFPLLGVLFFQGVYIVFS). One can recognise an Ig-like V-type domain in the interval 32-148 (LEIRADAHVR…NIPMTELTVT (117 aa)). Residues 32–158 (LEIRADAHVR…ERGFGTMLSS (127 aa)) are Extracellular-facing. C52 and C128 are oxidised to a cystine. A glycan (N-linked (GlcNAc...) asparagine) is linked at N123. Residues 159 to 179 (VALLSILVFVPSAVVVALLLV) form a helical membrane-spanning segment. Residues 180–235 (RMGRKAAGLKKRSRSGYKKSSIEVSDDTDQEEEEACMARLCVRCAECLDSDYEETY) are Cytoplasmic-facing.

The protein belongs to the myelin P0 protein family.

It is found in the membrane. Mediates homophilic cell-cell adhesion. In Homo sapiens (Human), this protein is Myelin protein zero-like protein 3 (MPZL3).